Reading from the N-terminus, the 547-residue chain is Putative HMP/thiamine import ATP-binding protein YkoD (547 aa).

ABC transporter domains are found at residues 8-250 and 295-523; these read LTVE…KLGI and LEVS…KAKL. ATP is bound by residues 42 to 49 and 327 to 334; these read GPSGCGKS and GPNGTGKS.

The protein belongs to the ABC transporter superfamily. In terms of assembly, the complex is composed of two ATP-binding proteins (YkoD), two transmembrane proteins (YkoC and YkoE) and a solute-binding protein (YkoF).

The protein resides in the cell membrane. Functionally, part of the ABC transporter complex YkoCDEF that could transport hydroxymethylpyrimidine (HMP) and/or thiamine. Could also transport other HMP-containing products. Responsible for energy coupling to the transport system. This is Putative HMP/thiamine import ATP-binding protein YkoD (ykoD) from Bacillus subtilis (strain 168).